An 833-amino-acid chain; its full sequence is Leucine--tRNA ligase (833 aa).

The 'HIGH' region motif lies at 41–52 (PYPSGAGLHVGH). Positions 610-614 (KMSKS) match the 'KMSKS' region motif. K613 is a binding site for ATP.

This sequence belongs to the class-I aminoacyl-tRNA synthetase family.

The protein localises to the cytoplasm. The catalysed reaction is tRNA(Leu) + L-leucine + ATP = L-leucyl-tRNA(Leu) + AMP + diphosphate. The chain is Leucine--tRNA ligase from Streptococcus pneumoniae (strain 70585).